The primary structure comprises 339 residues: Glycerol-3-phosphate dehydrogenase [NAD(P)+] (339 aa).

Residues Ser-13, Trp-14, and Lys-108 each coordinate NADPH. Sn-glycerol 3-phosphate is bound by residues Lys-108, Gly-139, and Ser-141. Ala-143 is a binding site for NADPH. 5 residues coordinate sn-glycerol 3-phosphate: Lys-194, Asp-247, Ser-257, Arg-258, and Asn-259. The Proton acceptor role is filled by Lys-194. Residue Arg-258 participates in NADPH binding. NADPH contacts are provided by Val-282 and Glu-284.

It belongs to the NAD-dependent glycerol-3-phosphate dehydrogenase family.

The protein localises to the cytoplasm. The catalysed reaction is sn-glycerol 3-phosphate + NAD(+) = dihydroxyacetone phosphate + NADH + H(+). It catalyses the reaction sn-glycerol 3-phosphate + NADP(+) = dihydroxyacetone phosphate + NADPH + H(+). It functions in the pathway membrane lipid metabolism; glycerophospholipid metabolism. In terms of biological role, catalyzes the reduction of the glycolytic intermediate dihydroxyacetone phosphate (DHAP) to sn-glycerol 3-phosphate (G3P), the key precursor for phospholipid synthesis. In Streptococcus equi subsp. zooepidemicus (strain H70), this protein is Glycerol-3-phosphate dehydrogenase [NAD(P)+].